A 533-amino-acid polypeptide reads, in one-letter code: MAKKRIAVIGSGASGLTCIKCCLEEGLEPVCFERSDDIGGLWRYQENPEKGRASIYKSVIINTSKEMMCFSDYPIPDHYPNFMHNSQVLEYFRMYAKEFGLLKYIQFKTTVCSVKKQPDFSTSGQWQVVTEHEGKQQVDVFDGVLVCTGHHTDPHLPLDSFPGIEKFKGKYFHSREYKNPVEFTGKRVIVIGIGNSGGDLAVEISHTAKQVFLSTRRGAWILNRVGKRGYPIDILLSSRITNYLSKICGSALKNRYMEKQLNQRFDHEMFGLKPKHSALGQHPTINDDLPNRIISGLVKVKGNVKEFTETAAIFEDGSREDDIDVVIFATGYSFAFPFLEDSVKVVQNKVSLYKKVFPPNLEKPTLAIIGLIQPLGAIMPISELQGRWATQVFKGLKKLPSQSEMMAEINKTREEMAKRYVDSQRHTIQGDYIDTMEEIADLVGVRPNLLSLAFTDPKLAFQLLVGPCTPVQYRLQGPGKWAGARKTILTTEDRIRKPLMTRVVERDSSGTSLVTVRVLMLAVTFLAVILAYF.

The residue at position 5 (Arg-5) is a Dimethylated arginine. Residues 10-14 (GSGAS), Glu-33, and 41-42 (LW) contribute to the FAD site. The residue at position 54 (Ser-54) is a Phosphoserine. Phosphotyrosine is present on Tyr-56. Ser-58 carries the post-translational modification Phosphoserine. Position 62–63 (62–63 (NT)) interacts with FAD. Residue 196 to 199 (SGGD) participates in NADP(+) binding. Thr-284 carries the post-translational modification Phosphothreonine. Ser-401 bears the Phosphoserine mark. A helical membrane pass occupies residues 513–533 (LVTVRVLMLAVTFLAVILAYF).

Belongs to the FMO family. It depends on FAD as a cofactor.

The protein resides in the microsome membrane. It localises to the endoplasmic reticulum membrane. It catalyses the reaction N,N-dimethylaniline + NADPH + O2 + H(+) = N,N-dimethylaniline N-oxide + NADP(+) + H2O. It carries out the reaction NADPH + O2 + H(+) = H2O2 + NADP(+). The enzyme catalyses heptan-2-one + NADPH + O2 + H(+) = pentyl acetate + NADP(+) + H2O. The catalysed reaction is octan-3-one + NADPH + O2 + H(+) = pentyl propanoate + NADP(+) + H2O. It catalyses the reaction octan-3-one + NADPH + O2 + H(+) = ethyl hexanoate + NADP(+) + H2O. It carries out the reaction hexan-3-one + NADPH + O2 + H(+) = ethyl butanoate + NADP(+) + H2O. The enzyme catalyses hexan-3-one + NADPH + O2 + H(+) = propyl propanoate + NADP(+) + H2O. The catalysed reaction is heptan-4-one + NADPH + O2 + H(+) = propyl butanoate + NADP(+) + H2O. It catalyses the reaction (2E)-geranial + NADPH + O2 + H(+) = (1E)-2,6-dimethylhepta-1,5-dien-1-yl formate + NADP(+) + H2O. It carries out the reaction sulcatone + NADPH + O2 + H(+) = 4-methylpent-3-en-1-yl acetate + NADP(+) + H2O. In terms of biological role, acts as a Baeyer-Villiger monooxygenase on a broad range of substrates. Catalyzes the insertion of an oxygen atom into a carbon-carbon bond adjacent to a carbonyl, which converts ketones to esters. Active on diverse carbonyl compounds, whereas soft nucleophiles are mostly non- or poorly reactive. In contrast with other forms of FMO it is non- or poorly active on 'classical' substrates such as drugs, pesticides, and dietary components containing soft nucleophilic heteroatoms. Able to oxidize drug molecules bearing a carbonyl group on an aliphatic chain, such as nabumetone and pentoxifylline. Also, in the absence of substrates, shows slow but yet significant NADPH oxidase activity. Acts as a positive modulator of cholesterol biosynthesis as well as glucose homeostasis, promoting metabolic aging via pleiotropic effects. In Rattus norvegicus (Rat), this protein is Flavin-containing monooxygenase 5.